We begin with the raw amino-acid sequence, 321 residues long: Protein ABIL3 (321 aa).

Disordered stretches follow at residues 179-273 (TIRE…RSAS) and 279-298 (EKEA…SKRL). Composition is skewed to low complexity over residues 204–215 (SATFSFSSIATA) and 240–255 (IRPS…SKSR). Positions 279–288 (EKEAQKEPEH) are enriched in basic and acidic residues.

This sequence belongs to the ABI family. In terms of assembly, binds SCAR.

Its subcellular location is the cytoplasm. It localises to the cytoskeleton. Its function is as follows. Involved in regulation of actin and microtubule organization. Part of a WAVE complex that activates the Arp2/3 complex. This is Protein ABIL3 (ABIL3) from Arabidopsis thaliana (Mouse-ear cress).